The sequence spans 513 residues: ATP synthase subunit alpha 2 (513 aa).

ATP is bound at residue 152-159 (GDSKTGKT).

This sequence belongs to the ATPase alpha/beta chains family. In terms of assembly, F-type ATPases have 2 components, CF(1) - the catalytic core - and CF(0) - the membrane proton channel. CF(1) has five subunits: alpha(3), beta(3), gamma(1), delta(1), epsilon(1). CF(0) has three main subunits: a(1), b(2) and c(9-12). The alpha and beta chains form an alternating ring which encloses part of the gamma chain. CF(1) is attached to CF(0) by a central stalk formed by the gamma and epsilon chains, while a peripheral stalk is formed by the delta and b chains.

Its subcellular location is the cell membrane. The enzyme catalyses ATP + H2O + 4 H(+)(in) = ADP + phosphate + 5 H(+)(out). In terms of biological role, produces ATP from ADP in the presence of a proton gradient across the membrane. The alpha chain is a regulatory subunit. The polypeptide is ATP synthase subunit alpha 2 (Mycoplasmopsis pulmonis (strain UAB CTIP) (Mycoplasma pulmonis)).